The chain runs to 304 residues: DCN1-like protein 3 (304 aa).

2 disordered regions span residues 1–86 (MGQC…AEES) and 284–304 (EGEG…EEQT). Gly2 carries the N-myristoyl glycine lipid modification. The DCUN1 domain occupies 86-278 (SSLQRLEELF…LFDTFVEWEM (193 aa)).

As to quaternary structure, part of a complex containing DCUN1D3, CUL3 and RBX1. Interacts (via the DCUN1 domain) with the unneddylated cullins: interacts with CUL1, CUL2, CUL3, CUL4A, CUL4B and CUL5; these interactions promote the cullin neddylation and the identity of the cullin dictates the affinity of the interaction. Interacts preferentially with CUL3; this interaction triggers the relocalization of CUL3 to the cell membrane where CUL3 is neddylated. Interacts (via DCUN1 domain) with RBX1. May also interact with regulators or subunits of cullin-RING ligases such as RNF7, ELOB and DDB1; these interactions are bridged by cullins. Interacts (via DCUN1 domain) with CAND1; this interaction is bridged by cullins and strongly inhibits cullin neddylation. These CAND-cullin-DCNL complexes can only be neddylated in the presence of a substrate adapter. Interacts (via DCUN1 domain) with the N-terminally acetylated form of UBE2M and UBE2F. Tends to be down-regulated in different type of cancers, including lung neuroendocrine carcinoma, thyroid Huerthle cell carcinoma and lung squamous cell carcinoma. Mostly expressed in testis and brain. Highly expressed in liver, bladder and renal normal tissue than their tumor tissue counterparts. Palmitoylation stabilizes DCUN1D3 at the cell membrane.

It is found in the cell membrane. It localises to the cytoplasm. The protein resides in the nucleus. Its subcellular location is the perinuclear region. In terms of biological role, contributes to the neddylation of all cullins by transferring NEDD8 from N-terminally acetylated NEDD8-conjugating E2s enzyme to different cullin C-terminal domain-RBX complexes and may play a role in the cell cycle progression by regulating the SCF ubiquitin E3 ligase complex, after UV damage. At the cell membrane, can promote and as well inhibit cullins neddylation. The chain is DCN1-like protein 3 from Homo sapiens (Human).